A 70-amino-acid chain; its full sequence is UPF0270 protein VIBHAR_00073 (70 aa).

It belongs to the UPF0270 family.

The polypeptide is UPF0270 protein VIBHAR_00073 (Vibrio campbellii (strain ATCC BAA-1116)).